Consider the following 261-residue polypeptide: Thiazole synthase (261 aa).

Lys102 functions as the Schiff-base intermediate with DXP in the catalytic mechanism. Residues Gly163, Ala189 to Gly190, and Asn211 to Thr212 contribute to the 1-deoxy-D-xylulose 5-phosphate site.

Belongs to the ThiG family. As to quaternary structure, homotetramer. Forms heterodimers with either ThiH or ThiS.

It localises to the cytoplasm. The catalysed reaction is [ThiS sulfur-carrier protein]-C-terminal-Gly-aminoethanethioate + 2-iminoacetate + 1-deoxy-D-xylulose 5-phosphate = [ThiS sulfur-carrier protein]-C-terminal Gly-Gly + 2-[(2R,5Z)-2-carboxy-4-methylthiazol-5(2H)-ylidene]ethyl phosphate + 2 H2O + H(+). It participates in cofactor biosynthesis; thiamine diphosphate biosynthesis. In terms of biological role, catalyzes the rearrangement of 1-deoxy-D-xylulose 5-phosphate (DXP) to produce the thiazole phosphate moiety of thiamine. Sulfur is provided by the thiocarboxylate moiety of the carrier protein ThiS. In vitro, sulfur can be provided by H(2)S. The chain is Thiazole synthase from Acinetobacter baumannii (strain AB307-0294).